The following is a 436-amino-acid chain: UBX domain-containing protein 7 (436 aa).

A Glycyl lysine isopeptide (Lys-Gly) (interchain with G-Cter in ubiquitin) cross-link involves residue lysine 19. The segment at 115 to 141 (AGESSSRETNPGLAREEKSSRDVHRKN) is disordered. The UBX domain maps to 212–290 (LHSSKCVLQI…ELTPRSALLL (79 aa)). Positions 325 to 346 (DKDPEVTSQREETSKPNRHEVR) are enriched in basic and acidic residues. Disordered regions lie at residues 325-357 (DKDPEVTSQREETSKPNRHEVRSSTPLSGAASS) and 371-436 (SSAH…EDKK). The span at 347–357 (SSTPLSGAASS) shows a compositional bias: low complexity. A compositionally biased stretch (polar residues) spans 371–408 (SSAHASPMLTPSGTRYPSETNLTTSRSVSPNVFQFVNN). Serine 388 is subject to Phosphoserine. A compositionally biased stretch (basic and acidic residues) spans 426–436 (HLEKKKDEDKK).

Interacts with CDC48.

It localises to the endoplasmic reticulum. Its function is as follows. Involved in CDC48-dependent protein degradation through the ubiquitin/proteasome pathway. The sequence is that of UBX domain-containing protein 7 (UBX7) from Saccharomyces cerevisiae (strain ATCC 204508 / S288c) (Baker's yeast).